Consider the following 241-residue polypeptide: MKGFFAGVVAAATLAVASAGDYCGQWDWAKSTNYIVYNNLWNKNAAASGSQCTGVDKISGSTIAWHTSYTWTGGAATEVKSYSNAALVFSKKQIKNIKSIPTKMKYSYSHSSGTFVADVSYDLFTSSTASGSNEYEIMIWLAAYGGAGPISSTGKAIATVTIGSNSFKLYKGPNGSTTVFSFVATKTITNFSADLQKFLSYLTKNQGLPSSQYLITLEAGTEPFVGTNAKMTVSSFSAAVN.

Residues 1–19 (MKGFFAGVVAAATLAVASA) form the signal peptide. Glutamate 136 is an active-site residue. Residues asparagine 174 and asparagine 190 are each glycosylated (N-linked (GlcNAc...) asparagine). Glutamate 222 is a catalytic residue.

It belongs to the glycosyl hydrolase 12 (cellulase H) family. Interacts with host apoplastic glucanase inhibitor GIP1.

The protein localises to the secreted. It is found in the host. It catalyses the reaction xyloglucan + H2O = xyloglucan oligosaccharides.. The xyloglucanase activity is inhibited by the binding of the host apoplastic glucanase inhibitor GIP1. Glycoside hydrolase that exhibits xyloglucanase activity. Acts as an important virulence factor during P.sojae infection but also acts as a pathogen-associated molecular pattern (PAMP) in soybean and solanaceous species, where it can trigger defense responses including cell death. XEG1-induced cell death can be suppressed by P.sojae RxLR effectors. The PAMP activity is independent of its xyloglucanase activity. XEG1 induces plant defense responses in a RLP kinase Serk3/Bak1-dependent manner in Nicotiana benthamiana. Moreover, the perception of XEG1 occurs independently of the perception of ethylene-inducing xylanase Eix2 in Tomato. With truncated paralog XLP1, is required to elevate apoplastic sugar during P.sojae infection. This Phytophthora sojae (strain P6497) (Soybean stem and root rot agent) protein is Xyloglucan-specific endo-beta-1,4-glucanase 1.